The chain runs to 265 residues: Tryptophan synthase alpha chain (265 aa).

Active-site proton acceptor residues include glutamate 49 and aspartate 60.

The protein belongs to the TrpA family. Tetramer of two alpha and two beta chains.

The enzyme catalyses (1S,2R)-1-C-(indol-3-yl)glycerol 3-phosphate + L-serine = D-glyceraldehyde 3-phosphate + L-tryptophan + H2O. It functions in the pathway amino-acid biosynthesis; L-tryptophan biosynthesis; L-tryptophan from chorismate: step 5/5. In terms of biological role, the alpha subunit is responsible for the aldol cleavage of indoleglycerol phosphate to indole and glyceraldehyde 3-phosphate. In Ralstonia nicotianae (strain ATCC BAA-1114 / GMI1000) (Ralstonia solanacearum), this protein is Tryptophan synthase alpha chain.